The primary structure comprises 57 residues: Large ribosomal subunit protein bL32 (57 aa).

The protein belongs to the bacterial ribosomal protein bL32 family.

The chain is Large ribosomal subunit protein bL32 from Staphylococcus haemolyticus (strain JCSC1435).